We begin with the raw amino-acid sequence, 396 residues long: Elongation factor Tu (396 aa).

In terms of domain architecture, tr-type G spans 10-206 (KPHVNVGTIG…ALDTYIPTPE (197 aa)). The segment at 19–26 (GHVDHGKT) is G1. 19 to 26 (GHVDHGKT) provides a ligand contact to GTP. Position 26 (Thr26) interacts with Mg(2+). The segment at 60–64 (GITIN) is G2. A G3 region spans residues 81–84 (DCPG). Residues 81–85 (DCPGH) and 136–139 (NKCD) each bind GTP. Residues 136 to 139 (NKCD) are G4. The tract at residues 174 to 176 (SAK) is G5.

This sequence belongs to the TRAFAC class translation factor GTPase superfamily. Classic translation factor GTPase family. EF-Tu/EF-1A subfamily. In terms of assembly, monomer.

The protein resides in the cytoplasm. It carries out the reaction GTP + H2O = GDP + phosphate + H(+). GTP hydrolase that promotes the GTP-dependent binding of aminoacyl-tRNA to the A-site of ribosomes during protein biosynthesis. This Cupriavidus necator (strain ATCC 17699 / DSM 428 / KCTC 22496 / NCIMB 10442 / H16 / Stanier 337) (Ralstonia eutropha) protein is Elongation factor Tu.